The primary structure comprises 352 residues: Protein RecA (352 aa).

Residue 67 to 74 (GPESSGKT) coordinates ATP. The interval 333–352 (DSTPDFAVDGNDAEETEQDF) is disordered. A compositionally biased stretch (acidic residues) spans 343–352 (NDAEETEQDF).

Belongs to the RecA family.

The protein localises to the cytoplasm. Functionally, can catalyze the hydrolysis of ATP in the presence of single-stranded DNA, the ATP-dependent uptake of single-stranded DNA by duplex DNA, and the ATP-dependent hybridization of homologous single-stranded DNAs. It interacts with LexA causing its activation and leading to its autocatalytic cleavage. The protein is Protein RecA of Klebsiella pneumoniae (strain 342).